Consider the following 137-residue polypeptide: Large ribosomal subunit protein uL16 (137 aa).

Belongs to the universal ribosomal protein uL16 family. As to quaternary structure, part of the 50S ribosomal subunit.

Functionally, binds 23S rRNA and is also seen to make contacts with the A and possibly P site tRNAs. The protein is Large ribosomal subunit protein uL16 of Nitrobacter hamburgensis (strain DSM 10229 / NCIMB 13809 / X14).